A 341-amino-acid polypeptide reads, in one-letter code: Twinfilin-2 (341 aa).

ADF-H domains follow at residues 1–131 (ATEE…KHLS) and 169–305 (GLAF…DEVH). N6-acetyllysine is present on lysine 6. Residue tyrosine 301 is modified to Phosphotyrosine. Residues 314-341 (AFAKPKGPGGKRGHKRLIRGPGENGDDS) form a disordered region. A compositionally biased stretch (basic residues) spans 322–331 (GGKRGHKRLI). A Phosphoserine modification is found at serine 341.

The protein belongs to the actin-binding proteins ADF family. Twinfilin subfamily. In terms of assembly, interacts with G-actin; ADP-actin form and capping protein (CP). May also be able to interact with TWF1 and phosphoinositides, PI(4,5)P2. When bound to PI(4,5)P2, it is down-regulated. Interacts with MYO7A. In terms of processing, phosphorylated on both serine and threonine residues.

Its subcellular location is the cytoplasm. The protein resides in the cytoskeleton. It is found in the perinuclear region. The protein localises to the cell projection. It localises to the stereocilium. In terms of biological role, actin-binding protein involved in motile and morphological processes. Inhibits actin polymerization, likely by sequestering G-actin. By capping the barbed ends of filaments, it also regulates motility. Seems to play an important role in clathrin-mediated endocytosis and distribution of endocytic organelles. May play a role in regulating the mature length of the middle and short rows of stereocilia. The protein is Twinfilin-2 (TWF2) of Pongo abelii (Sumatran orangutan).